Consider the following 378-residue polypeptide: Heat-inducible transcription repressor HrcA (378 aa).

Belongs to the HrcA family.

In terms of biological role, negative regulator of class I heat shock genes (grpE-dnaK-dnaJ and groELS operons). Prevents heat-shock induction of these operons. The chain is Heat-inducible transcription repressor HrcA from Synechocystis sp. (strain ATCC 27184 / PCC 6803 / Kazusa).